We begin with the raw amino-acid sequence, 305 residues long: Formamidopyrimidine-DNA glycosylase (305 aa).

Catalysis depends on P2, which acts as the Schiff-base intermediate with DNA. E3 functions as the Proton donor in the catalytic mechanism. K59 functions as the Proton donor; for beta-elimination activity in the catalytic mechanism. Residues H92, R111, and R154 each contribute to the DNA site. The segment at 239 to 273 adopts an FPG-type zinc-finger fold; the sequence is QVFDRAGEPCPVCGTPIRKVAVAQRGTHFCPRCQP. The active-site Proton donor; for delta-elimination activity is the R263. The segment at 282 to 305 is disordered; it reads PRRARPGRRGNSVRVAAEPPGTYE.

Belongs to the FPG family. Monomer. The cofactor is Zn(2+).

The enzyme catalyses Hydrolysis of DNA containing ring-opened 7-methylguanine residues, releasing 2,6-diamino-4-hydroxy-5-(N-methyl)formamidopyrimidine.. It catalyses the reaction 2'-deoxyribonucleotide-(2'-deoxyribose 5'-phosphate)-2'-deoxyribonucleotide-DNA = a 3'-end 2'-deoxyribonucleotide-(2,3-dehydro-2,3-deoxyribose 5'-phosphate)-DNA + a 5'-end 5'-phospho-2'-deoxyribonucleoside-DNA + H(+). Functionally, involved in base excision repair of DNA damaged by oxidation or by mutagenic agents. Acts as a DNA glycosylase that recognizes and removes damaged bases. Has a preference for oxidized purines, such as 7,8-dihydro-8-oxoguanine (8-oxoG). Has AP (apurinic/apyrimidinic) lyase activity and introduces nicks in the DNA strand. Cleaves the DNA backbone by beta-delta elimination to generate a single-strand break at the site of the removed base with both 3'- and 5'-phosphates. The polypeptide is Formamidopyrimidine-DNA glycosylase (Symbiobacterium thermophilum (strain DSM 24528 / JCM 14929 / IAM 14863 / T)).